We begin with the raw amino-acid sequence, 757 residues long: DNA replication licensing factor mcm5 (757 aa).

One can recognise an MCM domain in the interval 319–523 (LRNIIASSIA…KRDFIISKHV (205 aa)). The Arginine finger motif lies at 499-502 (SRFD). A disordered region spans residues 606-625 (INNGSYGGGGSKNSVETERK).

It belongs to the MCM family. Component of the MCM2-7 complex. The complex forms a toroidal hexameric ring with the proposed subunit order MCM2-MCM6-MCM4-MCM7-MCM3-MCM5 (By simililarity).

It is found in the nucleus. It localises to the cytoplasm. The protein resides in the cytosol. It carries out the reaction ATP + H2O = ADP + phosphate + H(+). Functionally, acts as a component of the MCM2-7 complex (MCM complex) which is the replicative helicase essential for 'once per cell cycle' DNA replication initiation and elongation in eukaryotic cells. Core component of CDC45-MCM-GINS (CMG) helicase, the molecular machine that unwinds template DNA during replication, and around which the replisome is built. The active ATPase sites in the MCM2-7 ring are formed through the interaction surfaces of two neighboring subunits such that a critical structure of a conserved arginine finger motif is provided in trans relative to the ATP-binding site of the Walker A box of the adjacent subunit. The six ATPase active sites, however, are likely to contribute differentially to the complex helicase activity. The protein is DNA replication licensing factor mcm5 (mcm5) of Dictyostelium discoideum (Social amoeba).